The sequence spans 246 residues: UDP-N-acetyl-D-mannosaminuronic acid transferase (246 aa).

The protein belongs to the glycosyltransferase 26 family.

The catalysed reaction is UDP-N-acetyl-alpha-D-mannosaminouronate + N-acetyl-alpha-D-glucosaminyl-di-trans,octa-cis-undecaprenyl diphosphate = beta-D-ManNAcA-(1-&gt;4)-alpha-D-GlcNAc-di-trans,octa-cis-undecaprenyl diphosphate + UDP + H(+). Its pathway is bacterial outer membrane biogenesis; enterobacterial common antigen biosynthesis. In terms of biological role, catalyzes the synthesis of Und-PP-GlcNAc-ManNAcA (Lipid II), the second lipid-linked intermediate involved in enterobacterial common antigen (ECA) synthesis. In Salmonella schwarzengrund (strain CVM19633), this protein is UDP-N-acetyl-D-mannosaminuronic acid transferase.